Consider the following 375-residue polypeptide: Succinyl-diaminopimelate desuccinylase (375 aa).

A Zn(2+)-binding site is contributed by H66. D68 is an active-site residue. D99 serves as a coordination point for Zn(2+). The active-site Proton acceptor is E133. Zn(2+) contacts are provided by E134, E162, and H348.

It belongs to the peptidase M20A family. DapE subfamily. As to quaternary structure, homodimer. Zn(2+) is required as a cofactor. It depends on Co(2+) as a cofactor.

The catalysed reaction is N-succinyl-(2S,6S)-2,6-diaminopimelate + H2O = (2S,6S)-2,6-diaminopimelate + succinate. It functions in the pathway amino-acid biosynthesis; L-lysine biosynthesis via DAP pathway; LL-2,6-diaminopimelate from (S)-tetrahydrodipicolinate (succinylase route): step 3/3. Functionally, catalyzes the hydrolysis of N-succinyl-L,L-diaminopimelic acid (SDAP), forming succinate and LL-2,6-diaminopimelate (DAP), an intermediate involved in the bacterial biosynthesis of lysine and meso-diaminopimelic acid, an essential component of bacterial cell walls. This is Succinyl-diaminopimelate desuccinylase from Citrobacter koseri (strain ATCC BAA-895 / CDC 4225-83 / SGSC4696).